A 336-amino-acid chain; its full sequence is Sulfate/thiosulfate import ATP-binding protein CysA (336 aa).

Residues 3-233 (ITIENVSKSF…PASPFVMSFI (231 aa)) enclose the ABC transporter domain. Residue 35-42 (GPSGSGKS) participates in ATP binding.

This sequence belongs to the ABC transporter superfamily. Sulfate/tungstate importer (TC 3.A.1.6) family. As to quaternary structure, the complex is composed of two ATP-binding proteins (CysA), two transmembrane proteins (CysT and CysW) and a solute-binding protein (CysP).

The protein resides in the cell inner membrane. The enzyme catalyses sulfate(out) + ATP + H2O = sulfate(in) + ADP + phosphate + H(+). It catalyses the reaction thiosulfate(out) + ATP + H2O = thiosulfate(in) + ADP + phosphate + H(+). Functionally, part of the ABC transporter complex CysAWTP involved in sulfate/thiosulfate import. Responsible for energy coupling to the transport system. This Thermosynechococcus vestitus (strain NIES-2133 / IAM M-273 / BP-1) protein is Sulfate/thiosulfate import ATP-binding protein CysA.